Reading from the N-terminus, the 244-residue chain is Ferredoxin--NADP reductase B (244 aa).

Residues 4 to 106 form the FAD-binding FR-type domain; sequence AEPFEARLVA…VGPHGLFTRD (103 aa). FAD-binding positions include 55–58 and Thr-120; that span reads RAYS.

Belongs to the ferredoxin--NADP reductase type 1 family. The cofactor is FAD.

The catalysed reaction is 2 reduced [4Fe-4S]-[ferredoxin] + NADP(+) + H(+) = 2 oxidized [4Fe-4S]-[ferredoxin] + NADPH. Transports electrons between NADPH and ferredoxin. Can transfer electrons to ferredoxins Fdx2 and Fdx8. Prefers NADPH to NADH. The sequence is that of Ferredoxin--NADP reductase B from Sorangium cellulosum (strain So ce56) (Polyangium cellulosum (strain So ce56)).